The primary structure comprises 286 residues: Putative 2-aminoethylphosphonate transport system permease protein PhnU (286 aa).

6 consecutive transmembrane segments (helical) span residues 19 to 39 (WLLL…SLIV), 76 to 96 (FFAT…LVFI), 111 to 131 (FIAL…GSAG), 150 to 170 (FLYS…PLVM), 202 to 222 (VIFP…LLLT), and 254 to 274 (YTVA…LFSL). The 208-residue stretch at 68 to 275 (LLNTLQIAFF…VLSLGLFSLY (208 aa)) folds into the ABC transmembrane type-1 domain.

Belongs to the binding-protein-dependent transport system permease family.

It localises to the cell inner membrane. Its function is as follows. Probably part of the PhnSTUV complex (TC 3.A.1.11.5) involved in 2-aminoethylphosphonate import. Probably responsible for the translocation of the substrate across the membrane. This Salmonella choleraesuis (strain SC-B67) protein is Putative 2-aminoethylphosphonate transport system permease protein PhnU (phnU).